A 1040-amino-acid polypeptide reads, in one-letter code: MLKTEKILHLKTQRGRSVRAVREHYLREDVRCGSALCHTCPRDGKLLSEELTHYVVPDCQVLQDYQEVLEFPELRGIIIMQTACQAVQHQRGRRQYKKLCSLLRDTRHDCILFSNEFQNHAYLPREMGESALAWQTRCIYNSCVWYYQHCQKKIPVVMVTEDESVIGKYNTETQEVYVVSFQIYLETFWPNFKGALELYKSLRDTHLERKLESRESNGKEYPEHLPLEILEAGIKSGRYKQGVLSVNKHRAQLESFVRLQGLGGKETDIQSDIFIHGTKPRNRAIHGDLVAVELLPKSEWKGRTGALCENETDEKVGDMQAEVMPTGRVVGIMQRNWRDYVVTFPAKEDTETQGKNTQKVLVMPWDYRIPKIRISTQQAEALQNYRVVVRIDSWESNSLYPNGHFVRALGRAGNLEAEIATILVENSISLNPFSEAQLAEMPSNTHENPWQVKPEEGDRLDLRETHLVFSIDPKGCEDVDDALSIRVLPSGDLELGVHIADVTHFVQHNTYTDIEARSRATTYYLADRRNDMLPLILSADLCSLLGAVDRYAVSVIWEMDCSTYEIRRVWYGRTIIRSSYKLSYEVAQQLLDGDLEPLSTEKELHPLKQDPARLQQLLWAVGKMTEVAHATRMRRNMSGALELEGVEVRVQLGEKHSIDDLVPKQPLQVHETIAECMILANHWVAKKIWESYPQHALLRLHPPPRQEFFQELKECAKARGFSIDTRSNKALADSLDQAHDPSDPLVNQLLRMMATQAMSNARYFSTGSYTEDEFYHYGLALEKYTHFTSPIRRYADIVVHRLLLAAVNKGPKDHLLGNKDLEELCRHINARNRAAQQCQKQSTELFQCMFFKDKDPDSDQRCISDAVIYGIRTNGVLLFIPRYGIKGAAYLKNTDGLVLACEEDGQCRWVHGSLQRLPAQIVVTTQEAKSFSFCLFDHVTVRIRIQSSRFHPDSIRLEIISNRPNPSQEALPSASNPQLLRTELVKEVTRTAVEAQLAVEGAAELKPVERYQEYRQTQGQSLYTMLEELWDLALLDVSGA.

The CSD1 domain occupies Ala-232 to Asn-310. In terms of domain architecture, CSD2 spans Val-360 to Asn-426. Residues Arg-459–Asn-808 form the RNB domain.

It belongs to the RNR ribonuclease family. As to quaternary structure, component of the RNA exosome complex. Requires Mg(2+) as cofactor.

The protein localises to the cytoplasm. It catalyses the reaction Exonucleolytic cleavage in the 3'- to 5'-direction to yield nucleoside 5'-phosphates.. Functionally, catalytic component of the RNA exosome complex which has 3'-&gt;5' exoribonuclease activity and participates in a multitude of cellular RNA processing and degradation events. The chain is DIS3-like exonuclease 1 (dis3l) from Xenopus laevis (African clawed frog).